The sequence spans 306 residues: Tyrosine recombinase XerC (306 aa).

A Core-binding (CB) domain is found at 6–92; it reads NTLYLQTKPY…ALRQWFSYLI (87 aa). A Tyr recombinase domain is found at 113-292; the sequence is RLPKNIDAEQ…DFQHLAKIYD (180 aa). Active-site residues include Arg-152, Lys-176, His-244, Arg-247, and His-270. The active-site O-(3'-phospho-DNA)-tyrosine intermediate is the Tyr-279.

It belongs to the 'phage' integrase family. XerC subfamily. In terms of assembly, forms a cyclic heterotetrameric complex composed of two molecules of XerC and two molecules of XerD.

The protein resides in the cytoplasm. Site-specific tyrosine recombinase, which acts by catalyzing the cutting and rejoining of the recombining DNA molecules. The XerC-XerD complex is essential to convert dimers of the bacterial chromosome into monomers to permit their segregation at cell division. It also contributes to the segregational stability of plasmids. This Actinobacillus pleuropneumoniae serotype 7 (strain AP76) protein is Tyrosine recombinase XerC.